The following is a 695-amino-acid chain: Frizzled and smoothened-like protein O (695 aa).

The first 23 residues, 1-23 (MKKLNYLLIVSFIFILNLLISKS), serve as a signal peptide directing secretion. At 24–233 (QVLIDVTAKC…KEYKTKFYSE (210 aa)) the chain is on the extracellular side. Positions 28–173 (DVTAKCELID…ANEEIQCSGP (146 aa)) constitute an FZ domain. 5 disulfide bridges follow: Cys33–Cys96, Cys42–Cys89, Cys80–Cys125, Cys114–Cys170, and Cys118–Cys138. The N-linked (GlcNAc...) asparagine glycan is linked to Asn47. 2 N-linked (GlcNAc...) asparagine glycosylation sites follow: Asn137 and Asn178. Residues 234-254 (AILFSFSTACSFYLIFTFGVF) form a helical membrane-spanning segment. The Cytoplasmic segment spans residues 255-262 (PNKYTNRN). The helical transmembrane segment at 263–283 (WIIVYLGITAICLAISYAVQE) threads the bilayer. The Extracellular portion of the chain corresponds to 284 to 307 (ARYGGGDWRCTSDPGRYKSSEDGT). Residues 308–328 (CILGGFFFQIGGLGTILFLSL) form a helical membrane-spanning segment. At 329–343 (YSFDMFLTMNMMTNK) the chain is on the cytoplasmic side. Residues 344-364 (YFIQTSVGMWALIIFYALLPI) traverse the membrane as a helical segment. At 365–387 (KHYESSIASAGCWLSNEDNMFWQ) the chain is on the extracellular side. Residues 388 to 408 (YFCFYVPSYVATFFLGVFIIT) form a helical membrane-spanning segment. The Cytoplasmic segment spans residues 409–435 (SIYKVFKMTVMFKSIKDKRILLLNIRS). The helical transmembrane segment at 436–456 (IIFLIAIMFCVSFSTMYPLYV) threads the bilayer. Residues 457–500 (TYNGDDFSKSVEVYVTCLYANIPNGNEVCPQIVFPQFSLRYMNA) are Extracellular-facing. Residues 501 to 521 (ITMAIIGIVGLIGLGIDPHIL) form a helical membrane-spanning segment. The Cytoplasmic segment spans residues 522-695 (QIYRESIRFK…NIERINSDNV (174 aa)). Over residues 545–556 (SPQPLKQGSTTD) the composition is skewed to polar residues. A disordered region spans residues 545 to 695 (SPQPLKQGST…NIERINSDNV (151 aa)). Over residues 593 to 608 (NLSASSESSNNLLNQS) the composition is skewed to low complexity. A compositionally biased stretch (polar residues) spans 609-625 (TPGNLNINESISSIDTS). The segment covering 626-686 (NNNNNNNNNN…NNNNNNNNNN (61 aa)) has biased composition (low complexity). Residues 653-691 (NNNNNNNNNNNNNNNNNNNNYSNNNNNNNNNNNNIERIN) are a coiled coil.

It belongs to the G-protein coupled receptor Fz/Smo family.

Its subcellular location is the membrane. This chain is Frizzled and smoothened-like protein O (fslO), found in Dictyostelium discoideum (Social amoeba).